We begin with the raw amino-acid sequence, 337 residues long: Ketol-acid reductoisomerase (NADP(+)) (337 aa).

The region spanning I3 to T183 is the KARI N-terminal Rossmann domain. NADP(+)-binding positions include Y26–Q29, R49, S52, S54, and D84–Q87. H109 is a catalytic residue. Residue G135 participates in NADP(+) binding. Residues T184–V329 enclose the KARI C-terminal knotted domain. Mg(2+) contacts are provided by D192, E196, E228, and E232. Residue S253 coordinates substrate.

The protein belongs to the ketol-acid reductoisomerase family. Requires Mg(2+) as cofactor.

It carries out the reaction (2R)-2,3-dihydroxy-3-methylbutanoate + NADP(+) = (2S)-2-acetolactate + NADPH + H(+). The enzyme catalyses (2R,3R)-2,3-dihydroxy-3-methylpentanoate + NADP(+) = (S)-2-ethyl-2-hydroxy-3-oxobutanoate + NADPH + H(+). It functions in the pathway amino-acid biosynthesis; L-isoleucine biosynthesis; L-isoleucine from 2-oxobutanoate: step 2/4. It participates in amino-acid biosynthesis; L-valine biosynthesis; L-valine from pyruvate: step 2/4. In terms of biological role, involved in the biosynthesis of branched-chain amino acids (BCAA). Catalyzes an alkyl-migration followed by a ketol-acid reduction of (S)-2-acetolactate (S2AL) to yield (R)-2,3-dihydroxy-isovalerate. In the isomerase reaction, S2AL is rearranged via a Mg-dependent methyl migration to produce 3-hydroxy-3-methyl-2-ketobutyrate (HMKB). In the reductase reaction, this 2-ketoacid undergoes a metal-dependent reduction by NADPH to yield (R)-2,3-dihydroxy-isovalerate. The chain is Ketol-acid reductoisomerase (NADP(+)) from Corynebacterium efficiens (strain DSM 44549 / YS-314 / AJ 12310 / JCM 11189 / NBRC 100395).